The chain runs to 238 residues: Orotidine 5'-phosphate decarboxylase (238 aa).

Residues D11, K32, 59-68 (DLKFHDIPNT), T123, R185, Q194, G214, and R215 contribute to the substrate site. The active-site Proton donor is K61.

Belongs to the OMP decarboxylase family. Type 1 subfamily. As to quaternary structure, homodimer.

The catalysed reaction is orotidine 5'-phosphate + H(+) = UMP + CO2. It functions in the pathway pyrimidine metabolism; UMP biosynthesis via de novo pathway; UMP from orotate: step 2/2. In terms of biological role, catalyzes the decarboxylation of orotidine 5'-monophosphate (OMP) to uridine 5'-monophosphate (UMP). The polypeptide is Orotidine 5'-phosphate decarboxylase (Nostoc sp. (strain PCC 7120 / SAG 25.82 / UTEX 2576)).